A 327-amino-acid chain; its full sequence is MEKNYYALAYYYFGPVSNPHEEIALHKQLFKTMDVSCRIYISEEGINGQFSGYQPDAERYMAWLKQRPDFASIKFKIHHIEENIFPRVTVKYRKELVALGCSVDTTKQGKHISPEEWHEKLQENRCLVLDVRNNYEWKIGHFENAVLPDIETFREFPDYADRLAKEHDPAKTPVMMYCTGGIRCELYSALLLEKGFKEVYQLDGGVIAYGLKMGTGKWRGKLFVFDDRMAMPIDEADPNVSPIARCSLCNTDSDTYYNCANTDCNNLFICCESCIATHKGCCSEECSQAPRIRAFSAERGNKPFRRKHLCPTIEQSCCLKEQENQPA.

The 97-residue stretch at 122 to 218 (QENRCLVLDV…YGLKMGTGKW (97 aa)) folds into the Rhodanese domain. C178 functions as the Cysteine persulfide intermediate in the catalytic mechanism.

It belongs to the TrhO family.

The enzyme catalyses uridine(34) in tRNA + AH2 + O2 = 5-hydroxyuridine(34) in tRNA + A + H2O. Catalyzes oxygen-dependent 5-hydroxyuridine (ho5U) modification at position 34 in tRNAs. The sequence is that of tRNA uridine(34) hydroxylase from Chlamydia trachomatis serovar A (strain ATCC VR-571B / DSM 19440 / HAR-13).